The following is a 1012-amino-acid chain: DNA polymerase catalytic subunit (1012 aa).

This sequence belongs to the DNA polymerase type-B family.

It is found in the host nucleus. It carries out the reaction DNA(n) + a 2'-deoxyribonucleoside 5'-triphosphate = DNA(n+1) + diphosphate. This Human herpesvirus 6A (strain Uganda-1102) (HHV-6 variant A) protein is DNA polymerase catalytic subunit (U38).